The following is a 148-amino-acid chain: 6,7-dimethyl-8-ribityllumazine synthase (148 aa).

5-amino-6-(D-ribitylamino)uracil-binding positions include Phe13, 44-46 (ALE), and 73-75 (MVI). 78–79 (ET) provides a ligand contact to (2S)-2-hydroxy-3-oxobutyl phosphate. The active-site Proton donor is His81. Asn106 serves as a coordination point for 5-amino-6-(D-ribitylamino)uracil. Residue Arg120 coordinates (2S)-2-hydroxy-3-oxobutyl phosphate.

This sequence belongs to the DMRL synthase family.

The catalysed reaction is (2S)-2-hydroxy-3-oxobutyl phosphate + 5-amino-6-(D-ribitylamino)uracil = 6,7-dimethyl-8-(1-D-ribityl)lumazine + phosphate + 2 H2O + H(+). It participates in cofactor biosynthesis; riboflavin biosynthesis; riboflavin from 2-hydroxy-3-oxobutyl phosphate and 5-amino-6-(D-ribitylamino)uracil: step 1/2. Catalyzes the formation of 6,7-dimethyl-8-ribityllumazine by condensation of 5-amino-6-(D-ribitylamino)uracil with 3,4-dihydroxy-2-butanone 4-phosphate. This is the penultimate step in the biosynthesis of riboflavin. This chain is 6,7-dimethyl-8-ribityllumazine synthase, found in Agrobacterium fabrum (strain C58 / ATCC 33970) (Agrobacterium tumefaciens (strain C58)).